The primary structure comprises 302 residues: Putative RING-H2 finger protein ATL35 (302 aa).

The N-terminal stretch at 1-31 is a signal peptide; that stretch reads MTIFARDLIYRIETKVLLPLFLVHLLPYVTC. A helical transmembrane segment spans residues 50 to 70; that stretch reads TVIAIIVLAIFISLSMVACFL. The segment at 123–165 adopts an RING-type; atypical zinc-finger fold; sequence CAICLSEFVDKETLRWMPPCSHTFHANCIDVWLSSQSTCPACR. Residue Ser226 is modified to Phosphoserine.

It belongs to the RING-type zinc finger family. ATL subfamily.

It localises to the membrane. It catalyses the reaction S-ubiquitinyl-[E2 ubiquitin-conjugating enzyme]-L-cysteine + [acceptor protein]-L-lysine = [E2 ubiquitin-conjugating enzyme]-L-cysteine + N(6)-ubiquitinyl-[acceptor protein]-L-lysine.. It functions in the pathway protein modification; protein ubiquitination. In Arabidopsis thaliana (Mouse-ear cress), this protein is Putative RING-H2 finger protein ATL35 (ATL35).